The primary structure comprises 233 residues: Mediator of RNA polymerase II transcription subunit 7 (233 aa).

Residue Lys-185 forms a Glycyl lysine isopeptide (Lys-Gly) (interchain with G-Cter in SUMO1); alternate linkage. A Glycyl lysine isopeptide (Lys-Gly) (interchain with G-Cter in SUMO2); alternate cross-link involves residue Lys-185. Residues 188–213 form a disordered region; sequence PMDADDSNNCTGQSDQQRENSGHRRD. The residue at position 194 (Ser-194) is a Phosphoserine. The span at 203–213 shows a compositional bias: basic and acidic residues; that stretch reads QQRENSGHRRD.

Belongs to the Mediator complex subunit 7 family. As to quaternary structure, component of the Mediator complex, which is composed of MED1, MED4, MED6, MED7, MED8, MED9, MED10, MED11, MED12, MED13, MED13L, MED14, MED15, MED16, MED17, MED18, MED19, MED20, MED21, MED22, MED23, MED24, MED25, MED26, MED27, MED29, MED30, MED31, CCNC, CDK8 and CDC2L6/CDK11. The MED12, MED13, CCNC and CDK8 subunits form a distinct module termed the CDK8 module. Mediator containing the CDK8 module is less active than Mediator lacking this module in supporting transcriptional activation. Individual preparations of the Mediator complex lacking one or more distinct subunits have been variously termed ARC, CRSP, DRIP, PC2, SMCC and TRAP.

Its subcellular location is the nucleus. Functionally, component of the Mediator complex, a coactivator involved in the regulated transcription of nearly all RNA polymerase II-dependent genes. Mediator functions as a bridge to convey information from gene-specific regulatory proteins to the basal RNA polymerase II transcription machinery. Mediator is recruited to promoters by direct interactions with regulatory proteins and serves as a scaffold for the assembly of a functional preinitiation complex with RNA polymerase II and the general transcription factors. The chain is Mediator of RNA polymerase II transcription subunit 7 (MED7) from Sus scrofa (Pig).